Here is a 237-residue protein sequence, read N- to C-terminus: Demethylmenaquinone methyltransferase (237 aa).

Residues Thr-58, Asp-79, and 106–107 each bind S-adenosyl-L-methionine; that span reads NA.

It belongs to the class I-like SAM-binding methyltransferase superfamily. MenG/UbiE family.

It carries out the reaction a 2-demethylmenaquinol + S-adenosyl-L-methionine = a menaquinol + S-adenosyl-L-homocysteine + H(+). The protein operates within quinol/quinone metabolism; menaquinone biosynthesis; menaquinol from 1,4-dihydroxy-2-naphthoate: step 2/2. Methyltransferase required for the conversion of demethylmenaquinol (DMKH2) to menaquinol (MKH2). The polypeptide is Demethylmenaquinone methyltransferase (Anoxybacillus flavithermus (strain DSM 21510 / WK1)).